Reading from the N-terminus, the 860-residue chain is DNA mismatch repair protein MutS (860 aa).

607 to 614 (GPNMSGKS) contacts ATP.

This sequence belongs to the DNA mismatch repair MutS family.

Functionally, this protein is involved in the repair of mismatches in DNA. It is possible that it carries out the mismatch recognition step. This protein has a weak ATPase activity. The chain is DNA mismatch repair protein MutS from Listeria monocytogenes serotype 4a (strain HCC23).